The primary structure comprises 430 residues: Forkhead box protein N2 (430 aa).

Residues 1–47 (MGPATGMTPDKNIESPTAEKVPGLSQTENMGSLPEEVGAARPKASMV) form a disordered region. A DNA-binding region (fork-head) is located at residues 108–204 (KPPYSFSLLI…QALKKQPFSS (97 aa)). Disordered regions lie at residues 299-326 (NIDP…SVSS) and 338-391 (PKNS…EASQ). The segment covering 355–366 (DDTDIDYEEDTL) has biased composition (acidic residues). The span at 381-390 (HGSKLRKEAS) shows a compositional bias: basic and acidic residues.

As to expression, expressed in the developing eye from stage 23. Localized to the prospective retinal layer and a layer of cells lateral to the ventricular zone. At stage 29, expression extends to the branchial arches and the brain. At stage 33/34, expressed in the vagal ganglion. At stage 36, expression in the retina decreases. Not expressed in the eye lens.

It is found in the nucleus. The sequence is that of Forkhead box protein N2 from Xenopus laevis (African clawed frog).